The primary structure comprises 197 residues: Casparian strip membrane protein 3 (197 aa).

Topologically, residues 1–35 (MSARVDIPADTSAAAKGTAPLIAASTHVKGGYKKG) are cytoplasmic. The helical transmembrane segment at 36–56 (LAIFDLVLRLGAVVTALAAAA) threads the bilayer. Topologically, residues 57-85 (TMGTTDQTLPFFTQFFQFQASYDDLPTFQ) are extracellular. A helical membrane pass occupies residues 86–106 (FFVIAMAIVSGYLVLSLPFSI). Topologically, residues 107–119 (VAIIRPHATGPRL) are cytoplasmic. A helical transmembrane segment spans residues 120–140 (LLIILDTVALTLNTAAAAAAV). The Extracellular segment spans residues 141-171 (AIVDLAQNGNSSANWLGICQQFGDFCQKASG). A glycan (N-linked (GlcNAc...) asparagine) is linked at Asn-150. A helical transmembrane segment spans residues 172 to 192 (AVVASFIAAGVLLFLIVISAL). The Cytoplasmic portion of the chain corresponds to 193–197 (ALRKR).

Belongs to the Casparian strip membrane proteins (CASP) family. In terms of assembly, homodimer and heterodimers.

The protein resides in the cell membrane. Regulates membrane-cell wall junctions and localized cell wall deposition. Required for establishment of the Casparian strip membrane domain (CSD) and the subsequent formation of Casparian strips, a cell wall modification of the root endodermis that determines an apoplastic barrier between the intraorganismal apoplasm and the extraorganismal apoplasm and prevents lateral diffusion. In Populus trichocarpa (Western balsam poplar), this protein is Casparian strip membrane protein 3.